The sequence spans 269 residues: Formamidopyrimidine-DNA glycosylase (269 aa).

Pro-2 functions as the Schiff-base intermediate with DNA in the catalytic mechanism. The Proton donor role is filled by Glu-3. Lys-57 acts as the Proton donor; for beta-elimination activity in catalysis. Positions 90, 109, and 150 each coordinate DNA. An FPG-type zinc finger spans residues 235-269; sequence QVYGRKGEPCRVCGTPIVATKHAQRATFYCRHCQK. The Proton donor; for delta-elimination activity role is filled by Arg-259.

It belongs to the FPG family. As to quaternary structure, monomer. Requires Zn(2+) as cofactor.

The enzyme catalyses Hydrolysis of DNA containing ring-opened 7-methylguanine residues, releasing 2,6-diamino-4-hydroxy-5-(N-methyl)formamidopyrimidine.. It catalyses the reaction 2'-deoxyribonucleotide-(2'-deoxyribose 5'-phosphate)-2'-deoxyribonucleotide-DNA = a 3'-end 2'-deoxyribonucleotide-(2,3-dehydro-2,3-deoxyribose 5'-phosphate)-DNA + a 5'-end 5'-phospho-2'-deoxyribonucleoside-DNA + H(+). Involved in base excision repair of DNA damaged by oxidation or by mutagenic agents. Acts as a DNA glycosylase that recognizes and removes damaged bases. Has a preference for oxidized purines, such as 7,8-dihydro-8-oxoguanine (8-oxoG). Has AP (apurinic/apyrimidinic) lyase activity and introduces nicks in the DNA strand. Cleaves the DNA backbone by beta-delta elimination to generate a single-strand break at the site of the removed base with both 3'- and 5'-phosphates. In Salmonella enteritidis PT4 (strain P125109), this protein is Formamidopyrimidine-DNA glycosylase.